A 464-amino-acid polypeptide reads, in one-letter code: Phosphoglucosamine mutase (464 aa).

The Phosphoserine intermediate role is filled by S112. Residues S112, D252, D254, and D256 each contribute to the Mg(2+) site. S112 bears the Phosphoserine mark.

It belongs to the phosphohexose mutase family. It depends on Mg(2+) as a cofactor. Post-translationally, activated by phosphorylation.

It carries out the reaction alpha-D-glucosamine 1-phosphate = D-glucosamine 6-phosphate. Functionally, catalyzes the conversion of glucosamine-6-phosphate to glucosamine-1-phosphate. In Synechococcus sp. (strain CC9605), this protein is Phosphoglucosamine mutase.